Consider the following 1755-residue polypeptide: Transposon Ty1-PR1 Gag-Pol polyprotein (1755 aa).

4 stretches are compositionally biased toward polar residues: residues 1 to 23, 48 to 60, 71 to 93, and 127 to 152; these read MESQ…SVTS, TKAN…TPAS, SPQT…MMTQ, and QSQF…GNTF. Disordered regions lie at residues 1-93, 126-173, and 352-421; these read MESQ…MMTQ, PQSQ…RPPP, and GSRN…SKST. Low complexity predominate over residues 153–165; the sequence is TDSSSADSDMTST. An RNA-binding region spans residues 299–401; that stretch reads NNGIHINNKV…NSKSKTARAH (103 aa). The span at 402–418 shows a compositional bias: low complexity; sequence NVSTSNNSPSTDNDSIS. The residue at position 416 (Ser416) is a Phosphoserine. Asp461 serves as the catalytic For protease activity; shared with dimeric partner. Residues 583–640 are integrase-type zinc finger-like; it reads NVHTSESTRKYPYPFIHRMLAHANAQTIRYSLKNNTITYFNESDVDWSSAIDYQCPDC. Residues 660–835 enclose the Integrase catalytic domain; it reads NSYEPFQYLH…AGLDISTLLP (176 aa). The Mg(2+) site is built by Asp671 and Asp736. 3 disordered regions span residues 956 to 1087, 1092 to 1111, and 1130 to 1187; these read SKAV…ETEK, RSPS…NIVP, and DLPL…DNET. A compositionally biased stretch (low complexity) spans 960-969; that stretch reads SPTDSTPPST. A compositionally biased stretch (polar residues) spans 1005–1015; that stretch reads STPQISNIEST. Basic and acidic residues predominate over residues 1038-1053; it reads ESSHASKSKDFRHSDS. 2 stretches are compositionally biased toward polar residues: residues 1054-1082 and 1101-1111; these read YSEN…QISD and PENNSSHNIVP. The Bipartite nuclear localization signal motif lies at 1178–1212; the sequence is KKRSLEDNETEIKVSRDTWNTKNMRSLEPPRSKKR. One can recognise a Reverse transcriptase Ty1/copia-type domain in the interval 1338-1476; the sequence is NNYYITQLDI…DILGLEIKYQ (139 aa). Positions 1346, 1427, 1428, 1610, 1652, and 1685 each coordinate Mg(2+). Positions 1610–1752 constitute an RNase H Ty1/copia-type domain; the sequence is DASYGNQPYY…IKTFKLLTNK (143 aa).

As to quaternary structure, the capsid protein forms a homotrimer, from which the VLPs are assembled. The protease is a homodimer, whose active site consists of two apposed aspartic acid residues. In terms of processing, initially, virus-like particles (VLPs) are composed of the structural unprocessed proteins Gag and Gag-Pol, and also contain the host initiator methionine tRNA (tRNA(i)-Met) which serves as a primer for minus-strand DNA synthesis, and a dimer of genomic Ty RNA. Processing of the polyproteins occurs within the particle and proceeds by an ordered pathway, called maturation. First, the protease (PR) is released by autocatalytic cleavage of the Gag-Pol polyprotein yielding capsid protein p45 and a Pol-p154 precursor protein. This cleavage is a prerequisite for subsequent processing of Pol-p154 at the remaining sites to release the mature structural and catalytic proteins. Maturation takes place prior to the RT reaction and is required to produce transposition-competent VLPs.

It localises to the cytoplasm. The protein resides in the nucleus. It catalyses the reaction DNA(n) + a 2'-deoxyribonucleoside 5'-triphosphate = DNA(n+1) + diphosphate. The catalysed reaction is Endonucleolytic cleavage to 5'-phosphomonoester.. Its function is as follows. Capsid protein (CA) is the structural component of the virus-like particle (VLP), forming the shell that encapsulates the retrotransposons dimeric RNA genome. The particles are assembled from trimer-clustered units and there are holes in the capsid shells that allow for the diffusion of macromolecules. CA also has nucleocapsid-like chaperone activity, promoting primer tRNA(i)-Met annealing to the multipartite primer-binding site (PBS), dimerization of Ty1 RNA and initiation of reverse transcription. The aspartyl protease (PR) mediates the proteolytic cleavages of the Gag and Gag-Pol polyproteins after assembly of the VLP. Functionally, reverse transcriptase/ribonuclease H (RT) is a multifunctional enzyme that catalyzes the conversion of the retro-elements RNA genome into dsDNA within the VLP. The enzyme displays a DNA polymerase activity that can copy either DNA or RNA templates, and a ribonuclease H (RNase H) activity that cleaves the RNA strand of RNA-DNA heteroduplexes during plus-strand synthesis and hydrolyzes RNA primers. The conversion leads to a linear dsDNA copy of the retrotransposon that includes long terminal repeats (LTRs) at both ends. In terms of biological role, integrase (IN) targets the VLP to the nucleus, where a subparticle preintegration complex (PIC) containing at least integrase and the newly synthesized dsDNA copy of the retrotransposon must transit the nuclear membrane. Once in the nucleus, integrase performs the integration of the dsDNA into the host genome. The protein is Transposon Ty1-PR1 Gag-Pol polyprotein (TY1B-PR1) of Saccharomyces cerevisiae (strain ATCC 204508 / S288c) (Baker's yeast).